The primary structure comprises 161 residues: 18.1 kDa class I heat shock protein (161 aa).

One can recognise a sHSP domain in the interval 45–160; the sequence is DVAAFTNARV…QVKSIDISGA (116 aa).

It belongs to the small heat shock protein (HSP20) family. As to quaternary structure, may form oligomeric structures. Binds to AKR2A.

The protein resides in the cytoplasm. This chain is 18.1 kDa class I heat shock protein (HSP18.1), found in Arabidopsis thaliana (Mouse-ear cress).